The chain runs to 84 residues: MFMADAYFADTVWYVGQIIFIVAICLLVIIVVVAFLATFKLCIQLCGMCNTLVLSPSIYVFNRGRQFYEFYNDVKPPVLDVDDV.

Residues 1–18 (MFMADAYFADTVWYVGQI) are Virion surface-facing. A helical membrane pass occupies residues 19-39 (IFIVAICLLVIIVVVAFLATF). Residues 40-80 (KLCIQLCGMCNTLVLSPSIYVFNRGRQFYEFYNDVKPPVLD) are Intravirion-facing.

It belongs to the betacoronaviruses E protein family. As to quaternary structure, homopentamer. Interacts with membrane protein M in the budding compartment of the host cell, which is located between endoplasmic reticulum and the Golgi complex. Interacts with Nucleoprotein.

It localises to the host Golgi apparatus membrane. Plays a central role in virus morphogenesis and assembly. Acts as a viroporin and self-assembles in host membranes forming pentameric protein-lipid pores that allow ion transport. Also plays a role in the induction of apoptosis. This Bovine coronavirus (strain 98TXSF-110-ENT) (BCoV-ENT) protein is Envelope small membrane protein.